The sequence spans 527 residues: Protein disulfide-isomerase A2 (527 aa).

Positions 1 to 20 (MDKQLLPVLLLLLGVSGSWG) are cleaved as a signal peptide. A disordered region spans residues 20 to 41 (GQGEEPGGPSEVLPEEPTGEEV). The 127-residue stretch at 29-155 (SEVLPEEPTG…IAEWLRRRVG (127 aa)) folds into the Thioredoxin 1 domain. Catalysis depends on nucleophile residues Cys74 and Cys77. Cys74 and Cys77 are joined by a disulfide. 2 N-linked (GlcNAc...) asparagine glycosylation sites follow: Asn130 and Asn287. The 145-residue stretch at 355-499 (VIAITAASVA…FSKFLDSGGH (145 aa)) folds into the Thioredoxin 2 domain. Residues Cys421 and Cys424 each act as nucleophile in the active site. Cys421 and Cys424 form a disulfide bridge. The tract at residues 495–527 (DSGGHLPKEEPKEPAASAPEAQANSTLGPKEEL) is disordered. Residue Asn518 is glycosylated (N-linked (GlcNAc...) asparagine). A Prevents secretion from ER motif is present at residues 524–527 (KEEL).

This sequence belongs to the protein disulfide isomerase family. In terms of assembly, part of a large chaperone multiprotein complex comprising DNAJB11, HSP90B1, HSPA5, HYOU, PDIA2, PDIA4, PDIA6, PPIB, SDF2L1, UGGT1 and very small amounts of ERP29, but not, or at very low levels, CALR nor CANX. Glycosylated. As to expression, highly expressed in pancreas.

The protein localises to the endoplasmic reticulum lumen. The catalysed reaction is Catalyzes the rearrangement of -S-S- bonds in proteins.. Functionally, acts as an intracellular estrogen-binding protein. May be involved in modulating cellular levels and biological functions of estrogens in the pancreas. May act as a chaperone that inhibits aggregation of misfolded proteins. The sequence is that of Protein disulfide-isomerase A2 from Mus musculus (Mouse).